Reading from the N-terminus, the 438-residue chain is UDP-N-acetylmuramoylalanine--D-glutamate ligase (438 aa).

112 to 118 (GSNGKST) serves as a coordination point for ATP.

Belongs to the MurCDEF family.

It localises to the cytoplasm. The catalysed reaction is UDP-N-acetyl-alpha-D-muramoyl-L-alanine + D-glutamate + ATP = UDP-N-acetyl-alpha-D-muramoyl-L-alanyl-D-glutamate + ADP + phosphate + H(+). Its pathway is cell wall biogenesis; peptidoglycan biosynthesis. Cell wall formation. Catalyzes the addition of glutamate to the nucleotide precursor UDP-N-acetylmuramoyl-L-alanine (UMA). This is UDP-N-acetylmuramoylalanine--D-glutamate ligase (murD) from Escherichia coli O6:H1 (strain CFT073 / ATCC 700928 / UPEC).